Here is a 199-residue protein sequence, read N- to C-terminus: Putative acetyltransferase SAV2555 (199 aa).

This sequence belongs to the transferase hexapeptide repeat family.

The polypeptide is Putative acetyltransferase SAV2555 (Staphylococcus aureus (strain Mu50 / ATCC 700699)).